The chain runs to 1088 residues: DNA polymerase II large subunit (1088 aa).

It belongs to the archaeal DNA polymerase II family. In terms of assembly, heterodimer of a large subunit and a small subunit.

It catalyses the reaction DNA(n) + a 2'-deoxyribonucleoside 5'-triphosphate = DNA(n+1) + diphosphate. The enzyme catalyses Exonucleolytic cleavage in the 3'- to 5'-direction to yield nucleoside 5'-phosphates.. Functionally, possesses two activities: a DNA synthesis (polymerase) and an exonucleolytic activity that degrades single-stranded DNA in the 3'- to 5'-direction. Has a template-primer preference which is characteristic of a replicative DNA polymerase. The sequence is that of DNA polymerase II large subunit (polC) from Thermoplasma volcanium (strain ATCC 51530 / DSM 4299 / JCM 9571 / NBRC 15438 / GSS1).